The primary structure comprises 465 residues: Paired box protein Pax-8 (465 aa).

A DNA-binding region (paired) is located at residues Gly26–Lys152. Positions Gly29–Thr85 are PAI subdomain. Residues Lys104–Lys152 form an RED subdomain region. A disordered region spans residues Pro206–Asp227.

In terms of tissue distribution, expression starts at late gastrula stages in cells fated to become the primordia of the otic system and the pronephric kidney. Expression is maintained in these two structures through late tailbud stages. Does not appear to be expressed in the thyroid gland.

The protein localises to the nucleus. Functionally, probable transcription factor. Involved in kidney development, acting synergistically with lhx1/lim-1 to establish the pronephric primordium in late gastrulae/early neurulae. This chain is Paired box protein Pax-8, found in Xenopus laevis (African clawed frog).